Consider the following 56-residue polypeptide: uncharacterized protein (56 aa).

Residues 33 to 53 (INIIYLAIMKIIMNIIMMIMI) form a helical membrane-spanning segment.

The protein resides in the host membrane. This is an uncharacterized protein from Bos taurus (Bovine).